A 503-amino-acid chain; its full sequence is MQATPGQRVRTRFAPSPTGHLHVGGLRTALYNYLYAKSMGGDFIVRIEDTDQARKVEGAERSLLNTLEVTGIVPDESFIHGGNFGPYVQSERLGIYSKYCEQLLEQKQAYYCFSTAEELEANRKLQMKQGMQPKYDRKWLPEEMGGNMPESEIRRKREEGAPFVVRMKVPDYISIMFEDMIRGPIEFDSATVDDQVLMKSDGFPTYHFASIIDDHLMEISHVIRGEEWLSSMPKHILLYEFFGWEPPKVAHLPLLLNPDRSKLSKRQGDVAAEDFISKGYSPEAIINFVALLGWNEGEGCEREVYSLDELKDKFTLRRVGKAGAVFNVEKLGWLEKQYIKARPASEIISAIKPLLQAELAKKETGMDADRLVSDDYLGQVIELMRERVNFEHEFISFSRYFYFDPEEFDEKAVAKRWVDDTNEVLGEFIEVLENTADFSADNIEAALKAFVAPREKKPAFLIHPVRILTSGVGFGPSLYHMLEVLGKETVIRRLRKGIGVVGK.

The short motif at 15-25 is the 'HIGH' region element; the sequence is PSPTGHLHVGG. Positions 262–266 match the 'KMSKS' region motif; the sequence is KLSKR. An ATP-binding site is contributed by lysine 265.

It belongs to the class-I aminoacyl-tRNA synthetase family. Glutamate--tRNA ligase type 1 subfamily. As to quaternary structure, monomer.

Its subcellular location is the cytoplasm. It carries out the reaction tRNA(Glu) + L-glutamate + ATP = L-glutamyl-tRNA(Glu) + AMP + diphosphate. Functionally, catalyzes the attachment of glutamate to tRNA(Glu) in a two-step reaction: glutamate is first activated by ATP to form Glu-AMP and then transferred to the acceptor end of tRNA(Glu). The protein is Glutamate--tRNA ligase of Chlorobium phaeobacteroides (strain BS1).